Reading from the N-terminus, the 331-residue chain is Putative NAD(P)H nitroreductase acg (331 aa).

FMN contacts are provided by residues 28–32 (QPWRW) and R316.

This sequence belongs to the nitroreductase family. FMN serves as cofactor.

In Mycobacterium tuberculosis (strain CDC 1551 / Oshkosh), this protein is Putative NAD(P)H nitroreductase acg (acg).